Reading from the N-terminus, the 199-residue chain is Recombination protein RecR (199 aa).

The C4-type zinc finger occupies 57-72 (CQQCRTFTEQNLCAIC). Positions 81-176 (GMICVVEMPV…KVSRIAHGVP (96 aa)) constitute a Toprim domain.

It belongs to the RecR family.

Functionally, may play a role in DNA repair. It seems to be involved in an RecBC-independent recombinational process of DNA repair. It may act with RecF and RecO. This chain is Recombination protein RecR, found in Psychromonas ingrahamii (strain DSM 17664 / CCUG 51855 / 37).